The following is a 488-amino-acid chain: Protein nucleotidyltransferase YdiU (488 aa).

8 residues coordinate ATP: glycine 91, glycine 93, arginine 94, lysine 114, aspartate 126, glycine 127, arginine 177, and arginine 184. Aspartate 253 functions as the Proton acceptor in the catalytic mechanism. 2 residues coordinate Mg(2+): asparagine 254 and aspartate 263. Aspartate 263 serves as a coordination point for ATP.

The protein belongs to the SELO family. The cofactor is Mg(2+). Mn(2+) serves as cofactor.

It carries out the reaction L-seryl-[protein] + ATP = 3-O-(5'-adenylyl)-L-seryl-[protein] + diphosphate. The catalysed reaction is L-threonyl-[protein] + ATP = 3-O-(5'-adenylyl)-L-threonyl-[protein] + diphosphate. It catalyses the reaction L-tyrosyl-[protein] + ATP = O-(5'-adenylyl)-L-tyrosyl-[protein] + diphosphate. The enzyme catalyses L-histidyl-[protein] + UTP = N(tele)-(5'-uridylyl)-L-histidyl-[protein] + diphosphate. It carries out the reaction L-seryl-[protein] + UTP = O-(5'-uridylyl)-L-seryl-[protein] + diphosphate. The catalysed reaction is L-tyrosyl-[protein] + UTP = O-(5'-uridylyl)-L-tyrosyl-[protein] + diphosphate. Its function is as follows. Nucleotidyltransferase involved in the post-translational modification of proteins. It can catalyze the addition of adenosine monophosphate (AMP) or uridine monophosphate (UMP) to a protein, resulting in modifications known as AMPylation and UMPylation. In Bacillus cereus (strain B4264), this protein is Protein nucleotidyltransferase YdiU.